Here is a 60-residue protein sequence, read N- to C-terminus: uncharacterized protein (60 aa).

Residues 11 to 33 traverse the membrane as a helical segment; that stretch reads VFTVGFITGGVTPVMVSFVWPAA. N40 and N57 each carry an N-linked (GlcNAc...) asparagine; by host glycan.

It is found in the host membrane. This is an uncharacterized protein from African swine fever virus (strain Badajoz 1971 Vero-adapted) (Ba71V).